Here is a 480-residue protein sequence, read N- to C-terminus: Gamma-aminobutyric acid receptor subunit rho-1 (480 aa).

An N-terminal signal peptide occupies residues 1–21 (MLAVRNMKFGIFLLWWGWVLA). At 22–281 (AESTVHWPGR…LYINFTLRRH (260 aa)) the chain is on the extracellular side. Residues 31 to 67 (REVHEPSKKGSRPQRQRRGAHDDAHKQGSPILKRSSD) form a disordered region. The span at 39 to 48 (KGSRPQRQRR) shows a compositional bias: basic residues. Arg126 contributes to the 4-aminobutanoate binding site. Asn141 is a glycosylation site (N-linked (GlcNAc...) asparagine). Residue Ser190 participates in 4-aminobutanoate binding. Residues Cys199 and Cys213 are joined by a disulfide bond. Glu218 contributes to the 4-aminobutanoate binding site. N-linked (GlcNAc...) asparagine glycosylation is found at Asn235 and Asn275. Residues 282–302 (IFFFLLQTYFPATLMVMLSWV) form a helical membrane-spanning segment. The Cytoplasmic segment spans residues 303–314 (SFWIDRRAVPAR). Residues 315–335 (VPLGITTVLTMSTIITGVNAS) form a helical membrane-spanning segment. At 336-346 (MPRVSYIKAVD) the chain is on the extracellular side. The helical transmembrane segment at 347–367 (IYLWVSFVFVFLSVLEYAAVN) threads the bilayer. Over 368-458 (YLTTVQERKE…MRINTHAIDK (91 aa)) the chain is Cytoplasmic. The helical transmembrane segment at 459–479 (YSRIIFPAAYILFNLIYWSIF) threads the bilayer. A topological domain (extracellular) is located at residue Ser480.

Belongs to the ligand-gated ion channel (TC 1.A.9) family. Gamma-aminobutyric acid receptor (TC 1.A.9.5) subfamily. GABRR1 sub-subfamily. Three rho subunits (rho-1/GBRR1, rho-2/GBRR2 and rho-3/GBRR3) coassemble either to form functional homopentamers or heteropentamers. Rho-1/GBRR1 subunits can also associate with alpha-1/GBRA1 subunits to form a functional GABAAR. Interacts with SQSTM1.

It localises to the postsynaptic cell membrane. The protein localises to the cell membrane. It carries out the reaction chloride(in) = chloride(out). With respect to regulation, inhibited by TPMPA, a rho-specific antagonist. Inhibited by picrotoxin, when forming a homopentamer. In contrast with other GABAARs, rho-1 GABAAR is not inhibited by bicuculline, when forming a homopentamer. Down-regulated by external protons when forming a homopentamer. Functionally, rho subunit of the pentameric ligand-gated chloride channels responsible for mediating the effects of gamma-aminobutyric acid (GABA), the major inhibitory neurotransmitter in the brain. Rho-containing GABA-gated chloride channels are a subclass of GABA(A) receptors (GABAARs) entirely composed of rho subunits, where GABA molecules bind at the rho intersubunit interfaces. When activated by GABA, rho-GABAARs selectively allow the flow of chloride anions across the cell membrane down their electrochemical gradient. Rho-1 subunits are primarily expressed in retina where rho-1-containing GABAARs may play a role in retinal neurotransmission. Rho-1 GABAARs are also involved in neuronal tonic (extrasynaptic) and phasic (synaptic) transmission in the Purkinje neurons of the cerebellum. Rho-1 GABAARs may also contribute to the regulation of glial development in the cerebellum by controlling extrasynaptic transmission. The sequence is that of Gamma-aminobutyric acid receptor subunit rho-1 from Rattus norvegicus (Rat).